Here is a 178-residue protein sequence, read N- to C-terminus: Ribosome maturation factor RimP (178 aa).

It belongs to the RimP family.

It is found in the cytoplasm. In terms of biological role, required for maturation of 30S ribosomal subunits. This is Ribosome maturation factor RimP from Streptococcus pyogenes serotype M3 (strain ATCC BAA-595 / MGAS315).